Here is a 285-residue protein sequence, read N- to C-terminus: PHO85 cyclin-7 (285 aa).

A compositionally biased stretch (low complexity) spans 1–14 (MELSSPSKKTTTSP). The tract at residues 1–42 (MELSSPSKKTTTSPINIPGGNRDNLIIGPHSHSFKTDPFSSN) is disordered. The residue at position 69 (S69) is a Phosphoserine.

The protein belongs to the cyclin family. PHO80 subfamily. Forms a cyclin-CDK complex with PHO85. Interacts with the substrate proteins MMR1 and YJL084C. Interacts with the CDK inhibitor (CKI) PHO81.

Its subcellular location is the cytoplasm. With respect to regulation, the PCL7-PHO85 cyclin-CDK is inhibited by PHO81 in low-phosphate conditions. In terms of biological role, cyclin partner of the cyclin-dependent kinase (CDK) PHO85. Together with cyclin PCL6, controls glycogen phosphorylase and glycogen synthase activities in response to nutrient availablility. The PCL7-PHO85 cyclin-CDK holoenzyme has GLC8 kinase activity and phosphorylates and inactivates the phosphatase PP1-2 inhibitor GLC8, causing activation of PP1-2, which then dephosphorylates and activates glycogen phosphorylase. PCL7-PHO85 also phosphorylates MMR1 and YJL084C. The sequence is that of PHO85 cyclin-7 (PCL7) from Saccharomyces cerevisiae (strain ATCC 204508 / S288c) (Baker's yeast).